Consider the following 191-residue polypeptide: Putative manganese efflux pump MntP (191 aa).

6 helical membrane passes run 3–23, 37–57, 65–85, 107–129, 144–164, and 169–189; these read PISILLIGFAMSTDAFAAAIG, LRAGIIFGVIEAITPIIGWLL, VEAFDHWIAFGLLGALGIHMI, WKLALTGFATSIDAMAVGIGLAF, CTLTMVTAGIMFGRVLGSMVG, and IIGGVILVIIGATILYEHLHG.

The protein belongs to the MntP (TC 9.B.29) family.

Its subcellular location is the cell inner membrane. Its function is as follows. Probably functions as a manganese efflux pump. The chain is Putative manganese efflux pump MntP from Stenotrophomonas maltophilia (strain K279a).